The sequence spans 240 residues: Aspartate/glutamate leucyltransferase (240 aa).

It belongs to the R-transferase family. Bpt subfamily.

It localises to the cytoplasm. The enzyme catalyses N-terminal L-glutamyl-[protein] + L-leucyl-tRNA(Leu) = N-terminal L-leucyl-L-glutamyl-[protein] + tRNA(Leu) + H(+). It catalyses the reaction N-terminal L-aspartyl-[protein] + L-leucyl-tRNA(Leu) = N-terminal L-leucyl-L-aspartyl-[protein] + tRNA(Leu) + H(+). Its function is as follows. Functions in the N-end rule pathway of protein degradation where it conjugates Leu from its aminoacyl-tRNA to the N-termini of proteins containing an N-terminal aspartate or glutamate. The sequence is that of Aspartate/glutamate leucyltransferase from Bordetella avium (strain 197N).